Reading from the N-terminus, the 355-residue chain is Carbohydrate sulfotransferase 10 (355 aa).

At 1–6 the chain is on the cytoplasmic side; that stretch reads MHHRWL. The chain crosses the membrane as a helical; Signal-anchor for type II membrane protein span at residues 7 to 27; sequence LLVACFWVLFMLMVASKLITL. Residues 28–355 lie on the Lumenal side of the membrane; sequence TMKDPEGYGN…FGYKEPTFLF (328 aa). N-linked (GlcNAc...) asparagine glycans are attached at residues N93 and N98. 3'-phosphoadenylyl sulfate is bound by residues 126-132 and 188-196; these read PKVGNTQ and RDPFERLIS. An N-linked (GlcNAc...) asparagine glycan is attached at N316.

This sequence belongs to the sulfotransferase 2 family.

The protein localises to the golgi apparatus membrane. Functionally, catalyzes the transfer of sulfate to position 3 of terminal glucuronic acid of both protein- and lipid-linked oligosaccharides. Participates in biosynthesis of HNK-1 carbohydrate structure, a sulfated glucuronyl-lactosaminyl residue carried by many neural recognition molecules. In Xenopus laevis (African clawed frog), this protein is Carbohydrate sulfotransferase 10 (chst10).